We begin with the raw amino-acid sequence, 272 residues long: Phosphoglycolate phosphatase (272 aa).

The Nucleophile role is filled by Asp-19. Asp-19, Asp-21, and Asp-182 together coordinate Mg(2+).

This sequence belongs to the HAD-like hydrolase superfamily. CbbY/CbbZ/Gph/YieH family. Requires Mg(2+) as cofactor.

The enzyme catalyses 2-phosphoglycolate + H2O = glycolate + phosphate. It functions in the pathway organic acid metabolism; glycolate biosynthesis; glycolate from 2-phosphoglycolate: step 1/1. Functionally, specifically catalyzes the dephosphorylation of 2-phosphoglycolate. Is involved in the dissimilation of the intracellular 2-phosphoglycolate formed during the DNA repair of 3'-phosphoglycolate ends, a major class of DNA lesions induced by oxidative stress. This chain is Phosphoglycolate phosphatase, found in Pseudomonas fluorescens (strain Pf0-1).